A 604-amino-acid polypeptide reads, in one-letter code: Aspartate--tRNA(Asp/Asn) ligase (604 aa).

Position 169 (E169) interacts with L-aspartate. An aspartate region spans residues 193–196 (QLFK). R215 contacts L-aspartate. ATP is bound by residues 215-217 (RDE) and Q224. H456 is a binding site for L-aspartate. Residue E490 coordinates ATP. R497 contacts L-aspartate. An ATP-binding site is contributed by 542–545 (GWDR). Residues 571-604 (PLTGAPAPITAQQRKEAGVDAQPEPKQAEAEPEA) are disordered.

The protein belongs to the class-II aminoacyl-tRNA synthetase family. Type 1 subfamily. Homodimer.

The protein localises to the cytoplasm. The enzyme catalyses tRNA(Asx) + L-aspartate + ATP = L-aspartyl-tRNA(Asx) + AMP + diphosphate. Its function is as follows. Aspartyl-tRNA synthetase with relaxed tRNA specificity since it is able to aspartylate not only its cognate tRNA(Asp) but also tRNA(Asn). Reaction proceeds in two steps: L-aspartate is first activated by ATP to form Asp-AMP and then transferred to the acceptor end of tRNA(Asp/Asn). The protein is Aspartate--tRNA(Asp/Asn) ligase of Micrococcus luteus (strain ATCC 4698 / DSM 20030 / JCM 1464 / CCM 169 / CCUG 5858 / IAM 1056 / NBRC 3333 / NCIMB 9278 / NCTC 2665 / VKM Ac-2230) (Micrococcus lysodeikticus).